We begin with the raw amino-acid sequence, 130 residues long: Succinate dehydrogenase assembly factor 3, mitochondrial (130 aa).

Residues methionine 1 to leucine 8 constitute a mitochondrion transit peptide.

This sequence belongs to the complex I LYR family. SDHAF3 subfamily. Interacts with the iron-sulfur protein subunit within the SDH catalytic dimer.

It localises to the mitochondrion matrix. Its function is as follows. Plays an essential role in the assembly of succinate dehydrogenase (SDH), an enzyme complex (also referred to as respiratory complex II) that is a component of both the tricarboxylic acid (TCA) cycle and the mitochondrial electron transport chain, and which couples the oxidation of succinate to fumarate with the reduction of ubiquinone (coenzyme Q) to ubiquinol. Promotes maturation of the iron-sulfur protein subunit of the SDH catalytic dimer, protecting it from the deleterious effects of oxidants. May act together with SDHAF1. The protein is Succinate dehydrogenase assembly factor 3, mitochondrial of Gibberella zeae (strain ATCC MYA-4620 / CBS 123657 / FGSC 9075 / NRRL 31084 / PH-1) (Wheat head blight fungus).